The chain runs to 61 residues: U-stichotoxin-Hcr1a (61 aa).

A signal peptide spans 1–21 (MKPAIFLMLFVAMFLISEGEG). A propeptide spanning residues 22–31 (FKPKDAPQER) is cleaved from the precursor. A Hydroxyproline modification is found at Pro-36. Cystine bridges form between Cys-41–Cys-53 and Cys-44–Cys-59.

The protein belongs to the Hau1a/HC18/HC19 family.

The protein resides in the secreted. It is found in the nematocyst. Its function is as follows. Toxin that is lethal to crab. Does not produce the typical symptoms associated with sodium channel toxins in crabs, suggesting that it likely does not act on sodium channels. The sequence is that of U-stichotoxin-Hcr1a from Radianthus crispa (Leathery sea anemone).